A 1108-amino-acid polypeptide reads, in one-letter code: MGSKGVYQYHWQSHNVKHSGVDDMVLLSKITENSIVENLKKRYMDDYIFTYIGSVLISVNPFKQMPYFGEKEIEMYQGAAQYENPPHIYALADNMYRNMIIDRENQCVIISGESGAGKTVAAKYIMSYISRVSGGGTKVQHVKDIILQSNPLLEAFGNAKTVRNNNSSRFGKYFEIQFSPGGEPDGGKISNFLLEKSRVVMRNPGERSFHIFYQLIEGASAEQKHSLGITSMDYYYYLSLSGSYKVDDIDDRREFQETLHAMNVIGIFAEEQTLVLQIVAGILHLGNISFKEVGNYAAVESEEFLAFPAYLLGINQDRLKEKLTSRQMDSKWGGKSESIHVTLNVEQACYTRDALAKALHARVFDFLVDSINKAMEKDHEEYNIGVLDIYGFEIFQKNGFEQFCINFVNEKLQQIFIELTLKAEQEEYVQEGIRWTPIEYFNNKIVCDLIENKVNPPGIMSILDDVCATMHAVGEGADQTLLQKLQMQIGSHEHFNSWNQGFIIHHYAGKVSYDMDGFCERNRDVLFMDLIELMQSSELPFIKSLFPENLQADKKGRPTTAGSKIKKQANDLVSTLMKCTPHYIRCIKPNETKKPRDWEESRVKHQVEYLGLKENIRVRRAGYAYRRIFQKFLQRYAILTKATWPSWQGEEKQGVLHLLQSVNMDSDQFQLGRSKVFIKAPESLFLLEEMRERKYDGYARVIQKSWRKFVARKKYVQMREEASDLLLNKKERRRNSINRNFIGDYIGMEEHPELQQFVGKREKIDFADTVTKYDRRFKGVKRDLLLTPKCLYLIGREKVKQGPDKGLVKEVLKRKIEIERILSVSLSTMQDDIFILHEQEYDSLLESVFKTEFLSLLAKRYEEKTQKQLPLKFSNTLELKLKKENWGPWSAGGSRQVQFHQGFGDLAVLKPSNKVLQVSIGPGLPKNSRPTRRNTTQNTGYSSGTQNANYPVRAAPPPPGYHQNGVIRNQYVPYPHAPGSQRSNQKSLYTSMARPPLPRQQSTSSDRVSQTPESLDFLKVPDQGAAGVRRQTTSRPPPAGGRPKPQPKPKPQVPQCKALYAYDAQDTDELSFNANDIIDIIKEDPSGWWTGRLRGKQGLFPNNYVTKI.

One can recognise a Myosin motor domain in the interval 19–692; that stretch reads SGVDDMVLLS…SLFLLEEMRE (674 aa). Position 112-119 (112-119) interacts with ATP; it reads GESGAGKT. The actin-binding stretch occupies residues 581–591; the sequence is PHYIRCIKPNE. Residues 695–724 enclose the IQ domain; it reads YDGYARVIQKSWRKFVARKKYVQMREEASD. The TH1 domain maps to 730–922; the sequence is KERRRNSINR…NKVLQVSIGP (193 aa). Positions 919–966 are disordered; that stretch reads SIGPGLPKNSRPTRRNTTQNTGYSSGTQNANYPVRAAPPPPGYHQNGV. The span at 933–949 shows a compositional bias: polar residues; that stretch reads RNTTQNTGYSSGTQNAN. Phosphoserine is present on residues Ser-980 and Ser-1002. The disordered stretch occupies residues 993–1053; sequence ARPPLPRQQS…KPQPKPKPQV (61 aa). The segment covering 999 to 1013 has biased composition (polar residues); it reads RQQSTSSDRVSQTPE. The segment covering 1035 to 1052 has biased composition (pro residues); that stretch reads RPPPAGGRPKPQPKPKPQ. An SH3 domain is found at 1051 to 1108; that stretch reads PQVPQCKALYAYDAQDTDELSFNANDIIDIIKEDPSGWWTGRLRGKQGLFPNNYVTKI.

Belongs to the TRAFAC class myosin-kinesin ATPase superfamily. Myosin family. In terms of assembly, interacts with CALM and F-actin. Interacts (via SH3 domain) with SYNJ1, DNM1 and DNM2. Interacts with ARL14EP. Interacts with CARMIL1. Expressed in the immune system. In the kidney, predominantly expressed in the glomerulus, including podocytes.

It localises to the cytoplasm. The protein localises to the cytoskeleton. It is found in the cytoplasmic vesicle. Its subcellular location is the clathrin-coated vesicle. The protein resides in the cell junction. Functionally, actin-based motor molecule with ATPase activity. Unconventional myosins serve in intracellular movements. Their highly divergent tails bind to membranous compartments, which are then moved relative to actin filaments. Binds to membranes containing anionic phospholipids via its tail domain. Involved in clathrin-mediated endocytosis and intracellular movement of clathrin-coated vesicles. Required for normal morphology of the glomerular basement membrane, normal development of foot processes by kidney podocytes and normal kidney function. In dendritic cells, may control the movement of class II-containing cytoplasmic vesicles along the actin cytoskeleton by connecting them with the actin network via ARL14EP and ARL14. This chain is Unconventional myosin-Ie (MYO1E), found in Homo sapiens (Human).